The primary structure comprises 262 residues: Putative non-heme bromoperoxidase BpoC (262 aa).

Residues R21, 87–88, and R120 each bind substrate; that span reads SM. S87 is a catalytic residue. Active-site residues include D211 and H239. H239 provides a ligand contact to substrate.

It belongs to the AB hydrolase superfamily. In terms of assembly, homodimer.

The protein is Putative non-heme bromoperoxidase BpoC (bpoC) of Mycobacterium tuberculosis (strain CDC 1551 / Oshkosh).